The sequence spans 498 residues: Inosine-5'-monophosphate dehydrogenase (498 aa).

CBS domains follow at residues 98 to 155 (MVVN…EQKI) and 159 to 216 (MTRE…PHAS). NAD(+)-binding positions include Asp253 and 303 to 305 (GIG). K(+) contacts are provided by Gly305 and Gly307. Ser308 serves as a coordination point for IMP. A K(+)-binding site is contributed by Cys310. Cys310 functions as the Thioimidate intermediate in the catalytic mechanism. Residues 343 to 345 (DGG), 366 to 367 (GS), and 390 to 394 (YRGMG) contribute to the IMP site. Residue Arg406 is the Proton acceptor of the active site. Glu421 contacts IMP. Glu475, Ser476, and His477 together coordinate K(+).

This sequence belongs to the IMPDH/GMPR family. Homotetramer. K(+) is required as a cofactor.

The enzyme catalyses IMP + NAD(+) + H2O = XMP + NADH + H(+). The protein operates within purine metabolism; XMP biosynthesis via de novo pathway; XMP from IMP: step 1/1. Mycophenolic acid (MPA) is a non-competitive inhibitor that prevents formation of the closed enzyme conformation by binding to the same site as the amobile flap. In contrast, mizoribine monophosphate (MZP) is a competitive inhibitor that induces the closed conformation. MPA is a potent inhibitor of mammalian IMPDHs but a poor inhibitor of the bacterial enzymes. MZP is a more potent inhibitor of bacterial IMPDH. Catalyzes the conversion of inosine 5'-phosphate (IMP) to xanthosine 5'-phosphate (XMP), the first committed and rate-limiting step in the de novo synthesis of guanine nucleotides, and therefore plays an important role in the regulation of cell growth. In Rhizobium tropici, this protein is Inosine-5'-monophosphate dehydrogenase.